The sequence spans 20 residues: Tetracycline resistance leader peptide (20 aa).

This Bacillus cereus protein is Tetracycline resistance leader peptide (tetL).